The chain runs to 115 residues: General stress protein 17M (115 aa).

In Bacillus subtilis (strain 168), this protein is General stress protein 17M (yflT).